The primary structure comprises 309 residues: Dicarboxylate carrier UCP2 (309 aa).

Residues 1–16 (MVGFKATDVPPTATVK) are Mitochondrial intermembrane-facing. Solcar repeat units follow at residues 11-106 (PTAT…VKQF), 114-203 (AGIG…IKDT), and 212-297 (DDLP…LKRA). An important for interaction with long-chain fatty acids region spans residues 16-63 (KFLGAGTAACIADLITFPLDTAKVRLQIQGERQGPMQAAASAQYRGVL). The helical transmembrane segment at 17–40 (FLGAGTAACIADLITFPLDTAKVR) threads the bilayer. Residues 41-77 (LQIQGERQGPMQAAASAQYRGVLGTILTMVRTEGPRS) are Mitochondrial matrix-facing. A helical transmembrane segment spans residues 78–103 (LYSGLVAGLQRQMSFASVRIGLYDSV). The Mitochondrial intermembrane segment spans residues 104–119 (KQFYTKGSEHAGIGSR). Residues 120 to 145 (LLAGSTTGALAVAVAQPTDVVKVRFQ) form a helical membrane-spanning segment. The Mitochondrial matrix segment spans residues 146–173 (AQARAGAGRRYQSTVEAYKTIAREEGFR). Residues 174–199 (GLWKGTSPNVARNAIVNCAELVTYDL) traverse the membrane as a helical segment. The Mitochondrial intermembrane portion of the chain corresponds to 200-217 (IKDTLLKAHLMTDDLPCH). Residues 218–242 (FTSAFGAGFCTTVIASPVDVVKTRY) traverse the membrane as a helical segment. Over 243-268 (MNSALGQYSSAGHCALTMLQKEGPQA) the chain is Mitochondrial matrix. Residues 269-294 (FYKGFMPSFLRLGSWNVVMFVTYEQL) form a helical membrane-spanning segment. Residues 278–285 (LRLGSWNV) form an important for interaction with long-chain fatty acids region. The Mitochondrial intermembrane portion of the chain corresponds to 295-309 (KRALMAARASREAPF).

The protein belongs to the mitochondrial carrier (TC 2.A.29) family. In terms of assembly, homotetramer. Adopts an asymmetrical dimer of dimers functional form. Interacts with MICU1 (when methylated); leading to decrease the calcium sensitivity of MICU1.

The protein resides in the mitochondrion inner membrane. The enzyme catalyses L-aspartate(out) + phosphate(in) + H(+)(in) = L-aspartate(in) + phosphate(out) + H(+)(out). The catalysed reaction is oxaloacetate(out) + phosphate(in) + H(+)(in) = oxaloacetate(in) + phosphate(out) + H(+)(out). It catalyses the reaction (S)-malate(out) + phosphate(in) + H(+)(in) = (S)-malate(in) + phosphate(out) + H(+)(out). It carries out the reaction malonate(out) + phosphate(in) + H(+)(in) = malonate(in) + phosphate(out) + H(+)(out). The enzyme catalyses sulfate(out) + phosphate(in) + H(+)(in) = sulfate(in) + phosphate(out) + H(+)(out). The catalysed reaction is (S)-malate(out) = (S)-malate(in). It catalyses the reaction L-aspartate(out) = L-aspartate(in). It carries out the reaction phosphate(in) = phosphate(out). The enzyme catalyses chloride(in) = chloride(out). The catalysed reaction is H(+)(in) = H(+)(out). It catalyses the reaction a long-chain fatty acid(out) = a long-chain fatty acid(in). Functionally, antiporter that exports dicarboxylate intermediates of the Krebs cycle in exchange for phosphate plus a proton across the inner membrane of mitochondria, a process driven by mitochondrial motive force with an overall impact on glycolysis, glutaminolysis and glutathione-dependent redox balance. Continuous export of oxaloacetate and related four-carbon dicarboxylates from mitochondrial matrix into the cytosol negatively regulates the oxidation of acetyl-CoA substrates via the Krebs cycle lowering the ATP/ADP ratio and reactive oxygen species (ROS) production. May mediate inducible proton entry into the mitochondrial matrix affecting ATP turnover as a protection mechanism against oxidative stress. The proton currents are most likely associated with fatty acid flipping across the inner membrane of mitochondria in a metabolic process regulated by free fatty acids and purine nucleotides. Regulates the use of glucose as a source of energy. Required for glucose-induced DRP1-dependent mitochondrial fission and neuron activation in the ventromedial nucleus of the hypothalamus (VMH). This mitochondrial adaptation mechanism modulates the VMH pool of glucose-excited neurons with an impact on systemic glucose homeostasis. Regulates ROS levels and metabolic reprogramming of macrophages during the resolution phase of inflammation. Attenuates ROS production in response to IL33 to preserve the integrity of the Krebs cycle required for persistent production of itaconate and subsequent GATA3-dependent differentiation of inflammation-resolving alternatively activated macrophages. Can unidirectionally transport anions including L-malate, L-aspartate, phosphate and chloride ions. Does not mediate adaptive thermogenesis. This chain is Dicarboxylate carrier UCP2 (UCP2), found in Bos taurus (Bovine).